A 417-amino-acid polypeptide reads, in one-letter code: Carboxypeptidase B (417 aa).

The N-terminal stretch at 1 to 15 (MLALLVLVTVALASA) is a signal peptide. Residues 16 to 110 (HHGGEHFEGE…VEAQFDSRVR (95 aa)) constitute a propeptide, activation peptide. Residues 118–412 (KYNKWETIEA…LAIKYVASYV (295 aa)) enclose the Peptidase M14 domain. An intrachain disulfide couples cysteine 173 to cysteine 186. 2 residues coordinate Zn(2+): histidine 176 and glutamate 179. Residues 176–179 (HARE), arginine 234, and 251–252 (NR) each bind substrate. 2 disulfide bridges follow: cysteine 245/cysteine 268 and cysteine 259/cysteine 273. A Zn(2+)-binding site is contributed by histidine 304. Substrate-binding positions include 305-306 (SY) and tyrosine 356. Glutamate 378 acts as the Proton donor/acceptor in catalysis.

The protein belongs to the peptidase M14 family. Zn(2+) serves as cofactor. As to expression, pancreas.

The protein localises to the secreted. The protein resides in the zymogen granule lumen. The catalysed reaction is Preferential release of a C-terminal lysine or arginine amino acid.. The protein is Carboxypeptidase B (CPB1) of Homo sapiens (Human).